The primary structure comprises 295 residues: UDP-N-acetylenolpyruvoylglucosamine reductase (295 aa).

The FAD-binding PCMH-type domain occupies 23–188; the sequence is KVGGPADFLA…ISAKFALKPG (166 aa). Residue Arg167 is part of the active site. Catalysis depends on Ser217, which acts as the Proton donor. Glu287 is an active-site residue.

Belongs to the MurB family. It depends on FAD as a cofactor.

Its subcellular location is the cytoplasm. It catalyses the reaction UDP-N-acetyl-alpha-D-muramate + NADP(+) = UDP-N-acetyl-3-O-(1-carboxyvinyl)-alpha-D-glucosamine + NADPH + H(+). Its pathway is cell wall biogenesis; peptidoglycan biosynthesis. Functionally, cell wall formation. The protein is UDP-N-acetylenolpyruvoylglucosamine reductase of Streptococcus pyogenes serotype M1.